Consider the following 104-residue polypeptide: Glutaredoxin (104 aa).

The 101-residue stretch at 3–103 (MIKAQELVSS…PLLTEAGAVK (101 aa)) folds into the Glutaredoxin domain. A disulfide bridge connects residues C23 and C26.

It belongs to the glutaredoxin family. CPYC subfamily.

Its subcellular location is the cytoplasm. In terms of biological role, has a glutathione-disulfide oxidoreductase activity in the presence of NADPH and glutathione reductase. Reduces low molecular weight disulfides and proteins. This Vernicia fordii (Tung) protein is Glutaredoxin.